Here is a 1472-residue protein sequence, read N- to C-terminus: ABC transporter FGM5 (1472 aa).

11 helical membrane passes run 32-52 (IILG…RVAT), 67-87 (FTKL…LILS), 100-120 (FAVA…ALSF), 163-183 (YAGV…LELQ), 197-217 (SPEE…IGIF), 271-291 (ALIV…GFQY), 316-336 (GLIG…ALFW), 386-406 (FHGL…CFLL), 412-432 (LAFI…TAIA), 493-513 (LLIM…VVAF), and 534-554 (LLTN…AAFV). The 268-residue stretch at 284 to 551 (IAMIGFQYAQ…MFQSVPAVIA (268 aa)) folds into the ABC transmembrane type-1 1 domain. One can recognise an ABC transporter 1 domain in the interval 605-834 (ISIVDGSFGW…GIYIPTLGLS (230 aa)). 638–645 (GPVASGKS) contacts ATP. 5 N-linked (GlcNAc...) asparagine glycosylation sites follow: asparagine 682, asparagine 696, asparagine 763, asparagine 784, and asparagine 843. 4 consecutive transmembrane segments (helical) span residues 900 to 920 (LLSG…MGWW), 938 to 958 (LFRG…VIFM), 1003 to 1023 (GELP…FAMA), and 1024 to 1044 (VVVA…FSII). An ABC transmembrane type-1 2 domain is found at 900-1139 (LLSGIMYAVG…VGVVAISTQL (240 aa)). A glycan (N-linked (GlcNAc...) asparagine) is linked at asparagine 1101. Residues 1116-1136 (FLATFLNLIVMVLAVGVVAIS) form a helical membrane-spanning segment. Residues 1218-1468 (YKNDDESPAS…EGSWFSQLWA (251 aa)) form the ABC transporter 2 domain. 1255–1262 (GRTGSGKS) is a binding site for ATP. Asparagine 1277 and asparagine 1293 each carry an N-linked (GlcNAc...) asparagine glycan.

It belongs to the ABC transporter superfamily. ABCC family. Conjugate transporter (TC 3.A.1.208) subfamily.

The protein resides in the cell membrane. Its pathway is secondary metabolite biosynthesis. Its function is as follows. ABC transporter; part of the Fg3_54/C64 gene cluster that mediates the biosynthesis of the octapeptide fusaoctaxin A, a virulence factor that is required for cell-to-cell invasiveness of plant host. The 2 nonribosomal peptide synthetases NRPS9 and NRPS5 form an assembly line which likely utilizes GABA as a starter unit (loaded on the unique module M1 of NRPS9) and sequentially incorporates seven extender units composed of the residues L-Ala, L-allo-Ile, L-Ser, L-Val, L-Ser, L-Leu and L-Leu, respectively. During the process, each of the residues that are tethered on modules M3-M7 of NRPS5 containing an E domain can undergo an epimerization reaction to produce a D-configuration before the transpeptidation reaction occurs. The elongation of the peptidyl chain might be terminated by module M8-mediated L-Leu incorporation, followed by R domain-catalyzed 4 electron reduction to release the resulting octapeptide from the assembly line as an alcohol. Fusaoctaxin A is cleaved by the cluster specific ABC transporter FGM5 to the pentapeptide fusapentaxin A and the tripeptide fusatrixin A. The other enzymes from the cluster, FGM1, FGM2, FGM3 and FGM9 seem not to be involved in the biosynthesis of fusaoctaxin A and their functions have still to be determined. The protein is ABC transporter FGM5 of Gibberella zeae (strain ATCC MYA-4620 / CBS 123657 / FGSC 9075 / NRRL 31084 / PH-1) (Wheat head blight fungus).